The sequence spans 226 residues: Cell division protein SepF (226 aa).

The interval 20–116 (RAYDDAGYDK…ESLTYHTRDN (97 aa)) is disordered. The span at 22–44 (YDDAGYDKGGYRESRYRSSRYSE) shows a compositional bias: basic and acidic residues. The span at 45-56 (DFGDEDDEDEEA) shows a compositional bias: acidic residues. A compositionally biased stretch (basic and acidic residues) spans 62-95 (RRGDRSRLERAAARSGDVDHNVEGEQPERVERAS). Polar residues predominate over residues 97 to 111 (RSITRSAEPSESLTY).

The protein belongs to the SepF family. In terms of assembly, homodimer. Interacts with FtsZ.

Its subcellular location is the cytoplasm. In terms of biological role, cell division protein that is part of the divisome complex and is recruited early to the Z-ring. Probably stimulates Z-ring formation, perhaps through the cross-linking of FtsZ protofilaments. Its function overlaps with FtsA. This chain is Cell division protein SepF, found in Salinispora arenicola (strain CNS-205).